A 297-amino-acid chain; its full sequence is Cell division protein ZipA (297 aa).

A topological domain (periplasmic) is located at residue methionine 1. The chain crosses the membrane as a helical span at residues 2 to 22 (EIGLREWLILIGIIVIAGILF). Residues 23-297 (DGWRRMRGGK…FERRALTQKR (275 aa)) are Cytoplasmic-facing. The tract at residues 48–150 (DEEGGSAEVL…GAAPASSSVK (103 aa)) is disordered. The span at 83 to 92 (ARDREREPKP) shows a compositional bias: basic and acidic residues. Residues 124-133 (LFADSDDDFA) show a composition bias toward acidic residues. Positions 136–149 (NNRSSGAAPASSSV) are enriched in polar residues.

The protein belongs to the ZipA family. Interacts with FtsZ via their C-terminal domains.

The protein resides in the cell inner membrane. Essential cell division protein that stabilizes the FtsZ protofilaments by cross-linking them and that serves as a cytoplasmic membrane anchor for the Z ring. Also required for the recruitment to the septal ring of downstream cell division proteins. This Pseudomonas putida (strain ATCC 700007 / DSM 6899 / JCM 31910 / BCRC 17059 / LMG 24140 / F1) protein is Cell division protein ZipA.